Here is a 178-residue protein sequence, read N- to C-terminus: HTH-type transcriptional regulator SutR (178 aa).

One can recognise an HTH cro/C1-type domain in the interval 12 to 66 (LKQLRQQRGWSLSRLAEATGVSKAMLGQIERNESSPTVATLWKIATGLNVPFSTF). Residues 23-42 (LSRLAEATGVSKAMLGQIER) constitute a DNA-binding region (H-T-H motif). The region spanning 105-171 (QMASGAISES…GGEQTVHFHS (67 aa)) is the Cupin type-2 domain.

In terms of biological role, regulates the expression of 12-16 transcription units involved in various steps of sulfur utilization. Represses expression of pfkB, fliZ, cysE, ydcO and its own expression. Activates expression of ypfN. Acts by binding to SutR boxes. This chain is HTH-type transcriptional regulator SutR, found in Escherichia coli (strain K12).